A 502-amino-acid polypeptide reads, in one-letter code: Phenylacetaldehyde dehydrogenase (502 aa).

An NAD(+)-binding site is contributed by 251–256 (GSTEVG). Active-site residues include glutamate 273 and cysteine 307.

The protein belongs to the aldehyde dehydrogenase family.

The enzyme catalyses 2-phenylacetaldehyde + NAD(+) + H2O = 2-phenylacetate + NADH + 2 H(+). The protein operates within aromatic compound metabolism. Its function is as follows. Phenylacetaldehyde dehydrogenase that catalyzes the last step in the aerobic styrene degradation pathway by mediating oxidation of phenylacetaldehyde to phenylacetic acid. The protein is Phenylacetaldehyde dehydrogenase (styD) of Pseudomonas fluorescens.